The primary structure comprises 171 residues: Photosystem I assembly protein Ycf3 (171 aa).

TPR repeat units follow at residues 35–68 (AFTY…EIDP), 72–105 (SYIL…NPSL), and 120–153 (GEQA…APNN).

It belongs to the Ycf3 family.

The protein localises to the plastid. It is found in the chloroplast thylakoid membrane. In terms of biological role, essential for the assembly of the photosystem I (PSI) complex. May act as a chaperone-like factor to guide the assembly of the PSI subunits. The chain is Photosystem I assembly protein Ycf3 from Psilotum nudum (Whisk fern).